We begin with the raw amino-acid sequence, 491 residues long: Aspartyl/glutamyl-tRNA(Asn/Gln) amidotransferase subunit B (491 aa).

Belongs to the GatB/GatE family. GatB subfamily. As to quaternary structure, heterotrimer of A, B and C subunits.

The catalysed reaction is L-glutamyl-tRNA(Gln) + L-glutamine + ATP + H2O = L-glutaminyl-tRNA(Gln) + L-glutamate + ADP + phosphate + H(+). It catalyses the reaction L-aspartyl-tRNA(Asn) + L-glutamine + ATP + H2O = L-asparaginyl-tRNA(Asn) + L-glutamate + ADP + phosphate + 2 H(+). Functionally, allows the formation of correctly charged Asn-tRNA(Asn) or Gln-tRNA(Gln) through the transamidation of misacylated Asp-tRNA(Asn) or Glu-tRNA(Gln) in organisms which lack either or both of asparaginyl-tRNA or glutaminyl-tRNA synthetases. The reaction takes place in the presence of glutamine and ATP through an activated phospho-Asp-tRNA(Asn) or phospho-Glu-tRNA(Gln). The chain is Aspartyl/glutamyl-tRNA(Asn/Gln) amidotransferase subunit B from Paraburkholderia phytofirmans (strain DSM 17436 / LMG 22146 / PsJN) (Burkholderia phytofirmans).